A 946-amino-acid polypeptide reads, in one-letter code: MKPDRDSLDEFFEYEAEDFLVYLALLITEGRTPEHSVKGRTEGPHCPPAQLSQPAPNKHECSDKLAQCREARKTRSEVAFLWRNNIPIMVEVMLLPDCCYSDEGANTDGNDLNDPALKQDALLLERWTLEPVPRQSGDRFIEEKTLLLAVRSFVFFSQLSAWLSVSHGAVPRNILYRVSAADEELKLNFSHSPTEHVFPVPNVSHNVALKVSVQSLPRQSSYPVLNCSIHSNLGFYEKKILPREHSVTQPHNSQDNDQNSAPVSQHAFTKPSWSVGPEGLLHARTNVSTDLSLPVRNSKLLSTVDKGYSIGTPPSKHQCFSMTGNYKAAPQEPVRNFKSFSLVGVPCSPQASQTVETNPLIGSLIQERQEVIARIAQHLLQCDQTSSQINSHSIINELSSINGKIKNSSEDEKFQKKNKESPPICTSTLALTLSTGNQISNLKKAPDTPINSSRPILEFHTSPNPQARRKLILFESNEHFCNPFQSSGQSTVPSSNNENINKLPEKRDIKQSEHGEISTRTGNQLSNSCNTNDRLCTNTQIVPEDKSCTDSFHKPQKDNPKICSQKVGHRNGQAQETTCRETRKSDHSNQLLSIENCINKDRDNIQYKEPQDKLKSVHDENEDPTNCDCLAQGQRKCNGNCLQRSESLKNTEQKPIQLRHSCTWKKQTFRSLDGISTKAFHPRTGLPLLSSPVPQRKTQSGYFDLDNSLLKLKGLSTQRQHVNGFTDEDTVATNKQLSSSAPPAPCLSLLGNFEESVLNYRFEPLGVVEGFTAEVGASGIFCPTHMTLPVKVSFYSVSDDNAPSPYMGNITLESLGKRGYRIPPSGTIQVTLFNPNKTVVKMFVVKYDLRDMPANHQTFLRQRTFSVPVRRETKGAVTENGLKAEDRTLRYLIHLRFQSSKSGKIYLHRDVRLLFSRKSMEVDSGAAYELKSYIETPTNPQYSPRC.

A transactivation domain 1 (TAD1) region spans residues 24-32 (ALLITEGRT). Basic and acidic residues predominate over residues 34–43 (EHSVKGRTEG). 4 disordered regions span residues 34 to 58 (EHSV…APNK), 246 to 271 (SVTQ…FTKP), 484 to 524 (FQSS…TGNQ), and 547 to 567 (SCTD…SQKV). Composition is skewed to polar residues over residues 247-267 (VTQP…SQHA) and 484-500 (FQSS…NENI). 2 stretches are compositionally biased toward basic and acidic residues: residues 503–517 (LPEK…HGEI) and 547–560 (SCTD…KDNP). The segment at 749 to 806 (LLGNFEESVLNYRFEPLGVVEGFTAEVGASGIFCPTHMTLPVKVSFYSVSDDNAPSPY) is required for macropage invasion. Residues 833–841 (FNPNKTVVK) form a transactivation domain 2 (TAD2) region.

The protein belongs to the ATOS family.

The protein resides in the nucleus. Its function is as follows. Transcription regulator that syncronizes transcriptional and translational programs to promote macrophage invasion of tissues. The protein is Atos homolog protein A (atosa) of Xenopus tropicalis (Western clawed frog).